A 327-amino-acid polypeptide reads, in one-letter code: Interleukin-12 subunit beta (327 aa).

The first 22 residues, 1–22 (MCLQQLVISWVSLVWLASPLLA), serve as a signal peptide directing secretion. The Ig-like C2-type domain occupies 23 to 106 (IWELEKNVYV…LSQMLLLLHK (84 aa)). Cys-50 and Cys-90 are disulfide-bonded. 2 N-linked (GlcNAc...) asparagine glycosylation sites follow: Asn-134 and Asn-152. The 91-residue stretch at 237 to 327 (PPKNLKMKPS…WSEWATMSCP (91 aa)) folds into the Fibronectin type-III domain.

It belongs to the IL-12B family. Heterodimer with IL12A; disulfide-linked. The heterodimer is known as interleukin IL-12. Heterodimer with IL23A; disulfide-linked. The heterodimer is known as interleukin IL-23. Also secreted as a monomer. Interacts with NBR1; this interaction promotes IL-12 secretion.

Its subcellular location is the secreted. In terms of biological role, cytokine that can act as a growth factor for activated T and NK cells, enhance the lytic activity of NK/lymphokine-activated killer cells, and stimulate the production of IFN-gamma by resting PBMC. Associates with IL23A to form the IL-23 interleukin, a heterodimeric cytokine which functions in innate and adaptive immunity. IL-23 may constitute with IL-17 an acute response to infection in peripheral tissues. IL-23 binds to a heterodimeric receptor complex composed of IL12RB1 and IL23R, activates the Jak-Stat signaling cascade, stimulates memory rather than naive T-cells and promotes production of pro-inflammatory cytokines. IL-23 induces autoimmune inflammation and thus may be responsible for autoimmune inflammatory diseases and may be important for tumorigenesis. The polypeptide is Interleukin-12 subunit beta (IL12B) (Marmota monax (Woodchuck)).